A 229-amino-acid chain; its full sequence is Ribose-5-phosphate isomerase A (229 aa).

Substrate-binding positions include 28–31, 85–88, and 98–101; these read TGST, DGAD, and KGRG. Glu107 serves as the catalytic Proton acceptor. Residue Lys125 participates in substrate binding.

The protein belongs to the ribose 5-phosphate isomerase family. As to quaternary structure, homodimer.

The enzyme catalyses aldehydo-D-ribose 5-phosphate = D-ribulose 5-phosphate. It functions in the pathway carbohydrate degradation; pentose phosphate pathway; D-ribose 5-phosphate from D-ribulose 5-phosphate (non-oxidative stage): step 1/1. In terms of biological role, catalyzes the reversible conversion of ribose-5-phosphate to ribulose 5-phosphate. The chain is Ribose-5-phosphate isomerase A from Thermococcus kodakarensis (strain ATCC BAA-918 / JCM 12380 / KOD1) (Pyrococcus kodakaraensis (strain KOD1)).